The chain runs to 227 residues: Phosphoribosylformylglycinamidine synthase subunit PurQ (227 aa).

One can recognise a Glutamine amidotransferase type-1 domain in the interval 3-225; it reads FAVIVFPGSN…LRNWRESHVV (223 aa). The active-site Nucleophile is Cys86. Residues His194 and Glu196 contribute to the active site.

As to quaternary structure, part of the FGAM synthase complex composed of 1 PurL, 1 PurQ and 2 PurS subunits.

It is found in the cytoplasm. The catalysed reaction is N(2)-formyl-N(1)-(5-phospho-beta-D-ribosyl)glycinamide + L-glutamine + ATP + H2O = 2-formamido-N(1)-(5-O-phospho-beta-D-ribosyl)acetamidine + L-glutamate + ADP + phosphate + H(+). The enzyme catalyses L-glutamine + H2O = L-glutamate + NH4(+). It functions in the pathway purine metabolism; IMP biosynthesis via de novo pathway; 5-amino-1-(5-phospho-D-ribosyl)imidazole from N(2)-formyl-N(1)-(5-phospho-D-ribosyl)glycinamide: step 1/2. In terms of biological role, part of the phosphoribosylformylglycinamidine synthase complex involved in the purines biosynthetic pathway. Catalyzes the ATP-dependent conversion of formylglycinamide ribonucleotide (FGAR) and glutamine to yield formylglycinamidine ribonucleotide (FGAM) and glutamate. The FGAM synthase complex is composed of three subunits. PurQ produces an ammonia molecule by converting glutamine to glutamate. PurL transfers the ammonia molecule to FGAR to form FGAM in an ATP-dependent manner. PurS interacts with PurQ and PurL and is thought to assist in the transfer of the ammonia molecule from PurQ to PurL. This chain is Phosphoribosylformylglycinamidine synthase subunit PurQ, found in Halalkalibacterium halodurans (strain ATCC BAA-125 / DSM 18197 / FERM 7344 / JCM 9153 / C-125) (Bacillus halodurans).